Consider the following 44-residue polypeptide: Small, acid-soluble spore protein N (44 aa).

The disordered stretch occupies residues 1-44 (MGNPKKNSKDFVPNHIGTQSKKAGGNKGKQMQDTTGKQPIVDNG).

The protein belongs to the SspN family.

The protein resides in the spore core. The polypeptide is Small, acid-soluble spore protein N (Bacillus cytotoxicus (strain DSM 22905 / CIP 110041 / 391-98 / NVH 391-98)).